Reading from the N-terminus, the 302-residue chain is Putative gluconeogenesis factor (302 aa).

The protein belongs to the gluconeogenesis factor family.

The protein resides in the cytoplasm. Functionally, required for morphogenesis under gluconeogenic growth conditions. In Salmonella typhi, this protein is Putative gluconeogenesis factor (ybhK).